Consider the following 444-residue polypeptide: MSATITATSATATATQKKPFYRILYVQVLAAIVLGVIVGWLWPDIGKNDWIKAMGDGFVKLIKMAIAPIIFCTVVSGIAHISEVKKVGRVAVKALVYFEVVSTFALALGLVVANVLRPGAGFQGQSNAAAVAGYAKQASEMKSVDFVLHIIPDTVVGAFAQGEILQVLLFAILFGFALMGLGERAHTVRSFVDDVAHAMFGVISIVVKVAPIGAFGAMAYTIGRYGPQALGNLAGLIATFYLTAFLFVVVGLGIIARIAGFSIFKFLKYIKDELLIVLGTSSSESALPQMMEKLEILGCSKSVVGLVVPTGYSFNLDGTNIYMTLATLFIAQAMNVDLSFGEQMTILVVAMLTSKGASGITGAGFITLAGTLAAVRPELLPGMAIVLGIDKFMSECRALTNLCGNGVACVVVAWWEGELDREKLRVALDRNVDPTDLEVAVTTG.

A run of 6 helical transmembrane segments spans residues 23 to 43 (ILYV…WLWP), 61 to 81 (LIKM…IAHI), 95 to 115 (LVYF…VANV), 162 to 182 (GEIL…MGLG), 198 to 218 (AMFG…FGAM), and 236 to 256 (LIAT…GIIA).

It belongs to the dicarboxylate/amino acid:cation symporter (DAACS) (TC 2.A.23) family.

Its subcellular location is the cell inner membrane. In terms of biological role, responsible for the transport of dicarboxylates such as succinate, fumarate, and malate from the periplasm across the membrane. The protein is C4-dicarboxylate transport protein 2 of Bradyrhizobium diazoefficiens (strain JCM 10833 / BCRC 13528 / IAM 13628 / NBRC 14792 / USDA 110).